A 529-amino-acid chain; its full sequence is UDP-glucuronosyltransferase 2B18 (529 aa).

A signal peptide spans methionine 1–glycine 21. N-linked (GlcNAc...) asparagine glycosylation is found at asparagine 67 and asparagine 68. A helical transmembrane segment spans residues valine 493–leucine 513.

Belongs to the UDP-glycosyltransferase family. As to expression, expressed in liver, prostate, kidney, testis, adrenal, bile duct, bladder, colon, small intestine, cerebellum and pancreas.

Its subcellular location is the microsome membrane. It is found in the endoplasmic reticulum membrane. The catalysed reaction is glucuronate acceptor + UDP-alpha-D-glucuronate = acceptor beta-D-glucuronoside + UDP + H(+). Functionally, UDPGT is of major importance in the conjugation and subsequent elimination of potentially toxic xenobiotics and endogenous compounds. This isozyme displays activity toward 3-hydroxyandrogens. It is principally active on C19 steroids having a hydroxyl group at position 3-alpha of the steroid molecule and also active on planar phenols and bile acids. This Macaca fascicularis (Crab-eating macaque) protein is UDP-glucuronosyltransferase 2B18 (UGT2B18).